Consider the following 241-residue polypeptide: Pyridoxine 5'-phosphate synthase (241 aa).

N7 serves as a coordination point for 3-amino-2-oxopropyl phosphate. D9 to H10 contributes to the 1-deoxy-D-xylulose 5-phosphate binding site. R18 is a 3-amino-2-oxopropyl phosphate binding site. H43 serves as the catalytic Proton acceptor. Residues R45 and H50 each contribute to the 1-deoxy-D-xylulose 5-phosphate site. E70 (proton acceptor) is an active-site residue. T100 lines the 1-deoxy-D-xylulose 5-phosphate pocket. The Proton donor role is filled by H191. 3-amino-2-oxopropyl phosphate is bound by residues G192 and G213–H214.

The protein belongs to the PNP synthase family. In terms of assembly, homooctamer; tetramer of dimers.

Its subcellular location is the cytoplasm. The enzyme catalyses 3-amino-2-oxopropyl phosphate + 1-deoxy-D-xylulose 5-phosphate = pyridoxine 5'-phosphate + phosphate + 2 H2O + H(+). Its pathway is cofactor biosynthesis; pyridoxine 5'-phosphate biosynthesis; pyridoxine 5'-phosphate from D-erythrose 4-phosphate: step 5/5. In terms of biological role, catalyzes the complicated ring closure reaction between the two acyclic compounds 1-deoxy-D-xylulose-5-phosphate (DXP) and 3-amino-2-oxopropyl phosphate (1-amino-acetone-3-phosphate or AAP) to form pyridoxine 5'-phosphate (PNP) and inorganic phosphate. In Nitratidesulfovibrio vulgaris (strain ATCC 29579 / DSM 644 / CCUG 34227 / NCIMB 8303 / VKM B-1760 / Hildenborough) (Desulfovibrio vulgaris), this protein is Pyridoxine 5'-phosphate synthase.